The following is a 238-amino-acid chain: Probable transcriptional regulatory protein SPD_1725 (238 aa).

This sequence belongs to the TACO1 family. YeeN subfamily.

The protein resides in the cytoplasm. This is Probable transcriptional regulatory protein SPD_1725 from Streptococcus pneumoniae serotype 2 (strain D39 / NCTC 7466).